The chain runs to 1386 residues: MGPEFEDSIPLVHSDNRTTTIYSVYIIISDIFSFVQWLLFKVLNLIIIDSPAFVLRLLSKNFEINLHLSSILATLIGVSVVTYLVIRYKFLTGYSHSNDQKEGAGKKGIHPASSKVFVGKSKQDKKPSNYLDEFLLAIKVFGYLDKAVFHELTKSMTTQKLSHEEILCLDESLGFSIVVEGVAQVYTKKSKENSSKYKQRYFEEIEEERDEFLILGDKQYQLLNEVKSGAPLSSLFSTLDLFRPRNKNEEMALTPNDEDGNSVVALNMDYLSKSEPATDSKLSNSDDDENGQDYPEIIVRPKKSHNNGTITIAIIPHTAFERVQSKYPKATSHIVTMVLTRLYKVTMSTVQNYLGLTSEILKSEIKLNEENATSLPRYFVDGLLERLNKKEEAEAEAENLPKKLKHHHRNQLQRTTSRYVSLDSKVKSNHPGDLLSSVPISRSEFQKKVLPKSSTTSLSDGDNKRMNFTDEMEETEENSLRVAIIENIFKMVGIEETNGIVERTGYFQSLSSSTSSSIVGLDSLNQSIMSGATTPTTKRSHPVFNNQGSLMNTINLAELRKPSTAENSTLPKLSGKKRLLSDMNIKDAFAKSLEIKYIGPDSTIVSQNSAITGLYYVIDGSLEIYNRSADVSAPNRYIYTVESGGIAGYLTSVVGFRSMVTIKTPKKTGAVVAYIPKNDYNKLLDKYYFLQLPVALKLKNLLSKQILTIDYALEWCHIPAGEVLCSQGDLANGFHVVLSGRFRVVRSTNKNTEKEDVEVLGEYGHGESIGEVEVLTASRRSNTLIAVRDSETARIPRSLFEMLSNENPSIMVSVSRLVASKVLASQYQPRERNFITSTTSQESFTSANYKTITILPTVSGLPVRQFAEKLVQALRQIGRNVIALDQASILTHLGRHAFDESLARLKLSGYFAYLEEEYETIVYICDTPVQSNWTSTCISQGDCILLLADAEDDSTTIGEYEQLLVKLKTTARTDLCLLHQDKVVRAGSTSPWLKNRIWVQGHHHIQMKFEQGANVLPHKKSFISDLAAKLSQNKAIKSTFEATKQHIKWYVKENDQSKVLKIYKDDFMRLARILSNEAVGLVLGGGGSRGISHVGVVTSLERHGIPVDIIGGTSIGSFVGGLYAKEYNIVSIYAMAKKFSKRISSVWRMLFDLTYPVTSYITGYEFNRGIWKVFGFAEIEDFWIKYFCNSANITNSTMDIHEKGYAWRFIRASMSLAGLLPPIAFNGCMLLDGGYLDNLPVNEMKKRGVKHIIAVDVGSVDDRTPMNYGDTLSGFWVLLNRWNPFSSHPNIPTMMDIQMRLTYVSSVNALEEAKRTPGVYYLRPPIDPYATLDFGKFDEIYKVGLKYADDLFADWKSKGKFPRIAGLVEKKKDGEEKKILYRRNSI.

Residues 1 to 19 (MGPEFEDSIPLVHSDNRTT) lie on the Cytoplasmic side of the membrane. The helical transmembrane segment at 20-40 (TIYSVYIIISDIFSFVQWLLF) threads the bilayer. Topologically, residues 41-65 (KVLNLIIIDSPAFVLRLLSKNFEIN) are lumenal. The helical transmembrane segment at 66 to 86 (LHLSSILATLIGVSVVTYLVI) threads the bilayer. At 87 to 1386 (RYKFLTGYSH…KKILYRRNSI (1300 aa)) the chain is on the cytoplasmic side. The segment at 394–416 (EAEAENLPKKLKHHHRNQLQRTT) is disordered. Positions 402–411 (KKLKHHHRNQ) are enriched in basic residues. Residues 577-701 (KRLL…LKNL) and 697-821 (KLKN…VASK) contribute to the a nucleoside 3',5'-cyclic phosphate site. The region spanning 1081–1245 (LVLGGGGSRG…LDNLPVNEMK (165 aa)) is the PNPLA domain. A GXGXXG motif is present at residues 1085–1090 (GGGSRG). Positions 1112 to 1116 (GTSIG) match the GXSXG motif. The active-site Nucleophile is the S1114. D1232 acts as the Proton acceptor in catalysis. A DGA/G motif is present at residues 1232–1234 (DGG).

It belongs to the NTE family.

The protein localises to the endoplasmic reticulum membrane. The catalysed reaction is a 1-acyl-sn-glycero-3-phosphocholine + H2O = sn-glycerol 3-phosphocholine + a fatty acid + H(+). Inhibited by organophosphorus esters. Its function is as follows. Intracellular phospholipase B that catalyzes the double deacylation of phosphatidylcholine (PC) to glycerophosphocholine (GroPCho). Plays an important role in membrane lipid homeostasis. Responsible for the rapid PC turnover in response to inositol, elevated temperatures, or when choline is present in the growth medium. The chain is Lysophospholipase NTE1 (NTE1) from Candida albicans (strain SC5314 / ATCC MYA-2876) (Yeast).